Consider the following 676-residue polypeptide: DNA ligase (676 aa).

Residues 35 to 39 (DNEYD), 84 to 85 (SL), and Glu115 contribute to the NAD(+) site. The active-site N6-AMP-lysine intermediate is the Lys117. Arg138, Glu177, Lys294, and Lys318 together coordinate NAD(+). Residues Cys412, Cys415, Cys430, and Cys436 each coordinate Zn(2+). One can recognise a BRCT domain in the interval 595–676 (PTRQPLNGES…FLAFLAQYSA (82 aa)).

Belongs to the NAD-dependent DNA ligase family. LigA subfamily. It depends on Mg(2+) as a cofactor. Mn(2+) is required as a cofactor.

It carries out the reaction NAD(+) + (deoxyribonucleotide)n-3'-hydroxyl + 5'-phospho-(deoxyribonucleotide)m = (deoxyribonucleotide)n+m + AMP + beta-nicotinamide D-nucleotide.. Its function is as follows. DNA ligase that catalyzes the formation of phosphodiester linkages between 5'-phosphoryl and 3'-hydroxyl groups in double-stranded DNA using NAD as a coenzyme and as the energy source for the reaction. It is essential for DNA replication and repair of damaged DNA. The chain is DNA ligase from Acinetobacter baylyi (strain ATCC 33305 / BD413 / ADP1).